Consider the following 104-residue polypeptide: Pyrimidine/purine nucleoside phosphorylase (104 aa).

Belongs to the nucleoside phosphorylase PpnP family.

The enzyme catalyses a purine D-ribonucleoside + phosphate = a purine nucleobase + alpha-D-ribose 1-phosphate. The catalysed reaction is adenosine + phosphate = alpha-D-ribose 1-phosphate + adenine. It carries out the reaction cytidine + phosphate = cytosine + alpha-D-ribose 1-phosphate. It catalyses the reaction guanosine + phosphate = alpha-D-ribose 1-phosphate + guanine. The enzyme catalyses inosine + phosphate = alpha-D-ribose 1-phosphate + hypoxanthine. The catalysed reaction is thymidine + phosphate = 2-deoxy-alpha-D-ribose 1-phosphate + thymine. It carries out the reaction uridine + phosphate = alpha-D-ribose 1-phosphate + uracil. It catalyses the reaction xanthosine + phosphate = alpha-D-ribose 1-phosphate + xanthine. Its function is as follows. Catalyzes the phosphorolysis of diverse nucleosides, yielding D-ribose 1-phosphate and the respective free bases. Can use uridine, adenosine, guanosine, cytidine, thymidine, inosine and xanthosine as substrates. Also catalyzes the reverse reactions. This Geobacter metallireducens (strain ATCC 53774 / DSM 7210 / GS-15) protein is Pyrimidine/purine nucleoside phosphorylase.